Here is a 372-residue protein sequence, read N- to C-terminus: Dual-specificity RNA methyltransferase RlmN (372 aa).

Catalysis depends on Glu-93, which acts as the Proton acceptor. A Radical SAM core domain is found at 99–338 (EKDRATLCIS…VTVRKTRGDD (240 aa)). The cysteines at positions 106 and 343 are disulfide-linked. [4Fe-4S] cluster is bound by residues Cys-113, Cys-117, and Cys-120. S-adenosyl-L-methionine-binding positions include 167 to 168 (GE), Ser-199, 221 to 223 (SLH), and Asn-300. Cys-343 serves as the catalytic S-methylcysteine intermediate.

This sequence belongs to the radical SAM superfamily. RlmN family. [4Fe-4S] cluster is required as a cofactor.

Its subcellular location is the cytoplasm. It carries out the reaction adenosine(2503) in 23S rRNA + 2 reduced [2Fe-2S]-[ferredoxin] + 2 S-adenosyl-L-methionine = 2-methyladenosine(2503) in 23S rRNA + 5'-deoxyadenosine + L-methionine + 2 oxidized [2Fe-2S]-[ferredoxin] + S-adenosyl-L-homocysteine. It catalyses the reaction adenosine(37) in tRNA + 2 reduced [2Fe-2S]-[ferredoxin] + 2 S-adenosyl-L-methionine = 2-methyladenosine(37) in tRNA + 5'-deoxyadenosine + L-methionine + 2 oxidized [2Fe-2S]-[ferredoxin] + S-adenosyl-L-homocysteine. Functionally, specifically methylates position 2 of adenine 2503 in 23S rRNA and position 2 of adenine 37 in tRNAs. m2A2503 modification seems to play a crucial role in the proofreading step occurring at the peptidyl transferase center and thus would serve to optimize ribosomal fidelity. The sequence is that of Dual-specificity RNA methyltransferase RlmN from Psychromonas ingrahamii (strain DSM 17664 / CCUG 51855 / 37).